Here is a 345-residue protein sequence, read N- to C-terminus: Transcription factor 19 (345 aa).

An FHA domain is found at 31–88 (YRLGHRADLCDVALRPQQEPGLISGIHAELHAEPRGDDWRVSLEDHSSQGTLVNNVRL). Ser-78 bears the Phosphoserine mark. A disordered region spans residues 190–227 (LTFSPSWGGPKSLPVPAPPGEMGTTPSAPPQRNRRKSV). A PHD-type zinc finger spans residues 293-342 (AAPCCCLPQEETVAWVQCDGCDVWFHVACVGCSIQAAREADFRCPGCRAG). Residues Cys-296, Cys-298, Cys-310, Cys-313, His-318, Cys-321, Cys-336, and Cys-339 each contribute to the Zn(2+) site.

The protein localises to the nucleus. In terms of biological role, potential transcription factor that may play a role in the regulation of genes involved in cell cycle G1/S transition. May bind to regulatory elements of genes, including the promoter of the transcription factor FOXO1. The protein is Transcription factor 19 (TCF19) of Homo sapiens (Human).